A 494-amino-acid chain; its full sequence is NADH-ubiquinone oxidoreductase chain 4 (494 aa).

Transmembrane regions (helical) follow at residues 6 to 26, 41 to 61, 87 to 107, 118 to 138, 141 to 161, 172 to 192, 207 to 227, 246 to 266, 280 to 300, 302 to 322, 336 to 356, 375 to 395, 415 to 435, and 460 to 480; these read IMIYLFSLLLIPLIVYFLLIY, TIGLTTLIINLILSMIIFILF, IDGISIYFLLLTTMIMPISLV, VLSFVIIILLLETLLLAVFLV, ILLFYIFFESILPPLFLLIGL, FYLFLYTLLGSLFMLLSIITM, ANFSYITQLFLFYGIFISFAV, PLAGSVILAGIVWKLRWYGIF, YTYIVYVIGVITIFYTSFSTL, TIAIKELIAYSSVSHAAVYLL, IALGLAHGFVSSGLFICVGGI, LMPIFCILFLYITLGNCGSPL, VLGVLASTSIVFSAAYTIFMF, and FILLISLVVPAVFFGIYPAVI.

This sequence belongs to the complex I subunit 4 family.

Its subcellular location is the mitochondrion membrane. It carries out the reaction a ubiquinone + NADH + 5 H(+)(in) = a ubiquinol + NAD(+) + 4 H(+)(out). In terms of biological role, core subunit of the mitochondrial membrane respiratory chain NADH dehydrogenase (Complex I) that is believed to belong to the minimal assembly required for catalysis. Complex I functions in the transfer of electrons from NADH to the respiratory chain. The immediate electron acceptor for the enzyme is believed to be ubiquinone. In Trichophyton rubrum (Athlete's foot fungus), this protein is NADH-ubiquinone oxidoreductase chain 4 (ND4).